The chain runs to 443 residues: Probable glycine dehydrogenase (decarboxylating) subunit 1 (443 aa).

This sequence belongs to the GcvP family. N-terminal subunit subfamily. The glycine cleavage system is composed of four proteins: P, T, L and H. In this organism, the P 'protein' is a heterodimer of two subunits.

It carries out the reaction N(6)-[(R)-lipoyl]-L-lysyl-[glycine-cleavage complex H protein] + glycine + H(+) = N(6)-[(R)-S(8)-aminomethyldihydrolipoyl]-L-lysyl-[glycine-cleavage complex H protein] + CO2. In terms of biological role, the glycine cleavage system catalyzes the degradation of glycine. The P protein binds the alpha-amino group of glycine through its pyridoxal phosphate cofactor; CO(2) is released and the remaining methylamine moiety is then transferred to the lipoamide cofactor of the H protein. The chain is Probable glycine dehydrogenase (decarboxylating) subunit 1 from Chlorobium limicola (strain DSM 245 / NBRC 103803 / 6330).